A 385-amino-acid polypeptide reads, in one-letter code: Mannitol-1-phosphate 5-dehydrogenase (385 aa).

Alanine 3–glycine 14 is an NAD(+) binding site.

It belongs to the mannitol dehydrogenase family.

It catalyses the reaction D-mannitol 1-phosphate + NAD(+) = beta-D-fructose 6-phosphate + NADH + H(+). The polypeptide is Mannitol-1-phosphate 5-dehydrogenase (Buchnera aphidicola subsp. Acyrthosiphon pisum (strain Tuc7)).